A 353-amino-acid polypeptide reads, in one-letter code: Rhodopsin (353 aa).

Residues 1-36 (MNGTEGENFYIPFSNKTGLARSPFEYPQYYLAEPWK) are Extracellular-facing. Residues N2 and N15 are each glycosylated (N-linked (GlcNAc...) asparagine). The helical transmembrane segment at 37–61 (YSVLAAYMFFLILVGFPVNFLTLFV) threads the bilayer. The Cytoplasmic portion of the chain corresponds to 62–73 (TVQHKKLRTPLN). A helical transmembrane segment spans residues 74–96 (YILLNLAVANLFMVLFGFTLTMY). Topologically, residues 97-110 (SSMNGYFVFGPTMC) are extracellular. C110 and C187 are oxidised to a cystine. A helical transmembrane segment spans residues 111-133 (NFEGFFATLGGEMSLWSLVVLAI). The short motif at 134–136 (ERY) is the 'Ionic lock' involved in activated form stabilization element. At 134-152 (ERYIVICKPMGNFRFGSTH) the chain is on the cytoplasmic side. A helical transmembrane segment spans residues 153–173 (AYMGVAFTWFMALSCAAPPLV). The Extracellular segment spans residues 174-202 (GWSRYLPEGMQCSCGPDYYTLNPNFNNES). The helical transmembrane segment at 203–224 (FVIYMFLVHFIIPFIVIFFCYG) threads the bilayer. Residues 225–252 (RLLCTVKEAAAAQQESASTQKAEKEVTR) are Cytoplasmic-facing. A helical membrane pass occupies residues 253–274 (MVVLMVIGFLVCWVPYASVAFY). At 275 to 286 (IFTHQGSDFGAT) the chain is on the extracellular side. The chain crosses the membrane as a helical span at residues 287 to 308 (FMTVPAFFAKTSALYNPIIYIL). K296 carries the N6-(retinylidene)lysine modification. Residues 309 to 353 (MNKQFRNCMITTLCCGKNPLGDEDSGASTSKTEVSSVSTSQVSPA) lie on the Cytoplasmic side of the membrane. Positions 330–353 (DEDSGASTSKTEVSSVSTSQVSPA) are disordered. The segment covering 336–353 (STSKTEVSSVSTSQVSPA) has biased composition (low complexity).

It belongs to the G-protein coupled receptor 1 family. Opsin subfamily. Post-translationally, phosphorylated on some or all of the serine and threonine residues present in the C-terminal region. Contains one covalently linked retinal chromophore.

Its subcellular location is the membrane. The protein localises to the cell projection. The protein resides in the cilium. It localises to the photoreceptor outer segment. Photoreceptor required for image-forming vision at low light intensity. While most salt water fish species use retinal as chromophore, most freshwater fish use 3-dehydroretinal, or a mixture of retinal and 3-dehydroretinal. Light-induced isomerization of 11-cis to all-trans retinal triggers a conformational change that activates signaling via G-proteins. Subsequent receptor phosphorylation mediates displacement of the bound G-protein alpha subunit by arrestin and terminates signaling. The chain is Rhodopsin (RHO) from Petromyzon marinus (Sea lamprey).